Consider the following 374-residue polypeptide: Probable trehalose-phosphate phosphatase 9 (374 aa).

This sequence belongs to the trehalose phosphatase family. A divalent metal cation is required as a cofactor.

The catalysed reaction is alpha,alpha-trehalose 6-phosphate + H2O = alpha,alpha-trehalose + phosphate. The protein operates within glycan biosynthesis; trehalose biosynthesis. Its function is as follows. Removes the phosphate from trehalose 6-phosphate to produce free trehalose. Trehalose accumulation in plant may improve abiotic stress tolerance. In Oryza sativa subsp. japonica (Rice), this protein is Probable trehalose-phosphate phosphatase 9 (TPP9).